A 250-amino-acid polypeptide reads, in one-letter code: Leucyl/phenylalanyl-tRNA--protein transferase (250 aa).

The tract at residues 1-21 is disordered; sequence MTPFRRPTVLGTSASAPFPPA.

Belongs to the L/F-transferase family.

It localises to the cytoplasm. It carries out the reaction N-terminal L-lysyl-[protein] + L-leucyl-tRNA(Leu) = N-terminal L-leucyl-L-lysyl-[protein] + tRNA(Leu) + H(+). It catalyses the reaction N-terminal L-arginyl-[protein] + L-leucyl-tRNA(Leu) = N-terminal L-leucyl-L-arginyl-[protein] + tRNA(Leu) + H(+). The catalysed reaction is L-phenylalanyl-tRNA(Phe) + an N-terminal L-alpha-aminoacyl-[protein] = an N-terminal L-phenylalanyl-L-alpha-aminoacyl-[protein] + tRNA(Phe). In terms of biological role, functions in the N-end rule pathway of protein degradation where it conjugates Leu, Phe and, less efficiently, Met from aminoacyl-tRNAs to the N-termini of proteins containing an N-terminal arginine or lysine. The sequence is that of Leucyl/phenylalanyl-tRNA--protein transferase from Xanthomonas euvesicatoria pv. vesicatoria (strain 85-10) (Xanthomonas campestris pv. vesicatoria).